Consider the following 274-residue polypeptide: 4-diphosphocytidyl-2-C-methyl-D-erythritol kinase (274 aa).

Lys10 is an active-site residue. 101 to 111 is an ATP binding site; it reads PTQAGLGGGSA. The active site involves Asp143.

The protein belongs to the GHMP kinase family. IspE subfamily.

The enzyme catalyses 4-CDP-2-C-methyl-D-erythritol + ATP = 4-CDP-2-C-methyl-D-erythritol 2-phosphate + ADP + H(+). The protein operates within isoprenoid biosynthesis; isopentenyl diphosphate biosynthesis via DXP pathway; isopentenyl diphosphate from 1-deoxy-D-xylulose 5-phosphate: step 3/6. Functionally, catalyzes the phosphorylation of the position 2 hydroxy group of 4-diphosphocytidyl-2C-methyl-D-erythritol. In Helicobacter pylori (strain HPAG1), this protein is 4-diphosphocytidyl-2-C-methyl-D-erythritol kinase.